The following is a 131-amino-acid chain: Small ribosomal subunit protein uS8 (131 aa).

It belongs to the universal ribosomal protein uS8 family. Part of the 30S ribosomal subunit. Contacts proteins S5 and S12.

Functionally, one of the primary rRNA binding proteins, it binds directly to 16S rRNA central domain where it helps coordinate assembly of the platform of the 30S subunit. This is Small ribosomal subunit protein uS8 from Methylobacillus flagellatus (strain ATCC 51484 / DSM 6875 / VKM B-1610 / KT).